The chain runs to 60 residues: DNA-directed RNA polymerase subunit Rpo6 (60 aa).

It belongs to the archaeal Rpo6/eukaryotic RPB6 RNA polymerase subunit family. In terms of assembly, part of the RNA polymerase complex.

Its subcellular location is the cytoplasm. The enzyme catalyses RNA(n) + a ribonucleoside 5'-triphosphate = RNA(n+1) + diphosphate. In terms of biological role, DNA-dependent RNA polymerase (RNAP) catalyzes the transcription of DNA into RNA using the four ribonucleoside triphosphates as substrates. This is DNA-directed RNA polymerase subunit Rpo6 from Methanothrix thermoacetophila (strain DSM 6194 / JCM 14653 / NBRC 101360 / PT) (Methanosaeta thermophila).